A 234-amino-acid polypeptide reads, in one-letter code: Adenosine 5'-phosphosulfate reductase (234 aa).

Positions 120, 121, 203, and 206 each coordinate [4Fe-4S] cluster. Cysteine 229 acts as the Nucleophile; cysteine thiosulfonate intermediate in catalysis.

It belongs to the PAPS reductase family. CysH subfamily. [4Fe-4S] cluster is required as a cofactor.

The protein resides in the cytoplasm. The catalysed reaction is [thioredoxin]-disulfide + sulfite + AMP + 2 H(+) = adenosine 5'-phosphosulfate + [thioredoxin]-dithiol. Its pathway is sulfur metabolism; hydrogen sulfide biosynthesis; sulfite from sulfate. In terms of biological role, catalyzes the formation of sulfite from adenosine 5'-phosphosulfate (APS) using thioredoxin as an electron donor. This Bacillus cereus (strain AH187) protein is Adenosine 5'-phosphosulfate reductase.